The chain runs to 85 residues: Progonadoliberin-2 (85 aa).

The signal sequence occupies residues 1–23 (MCVSRLVLLFGLLLCVGAQLSNA). Q24 bears the Pyrrolidone carboxylic acid mark. Glycine amide is present on G33.

The protein belongs to the GnRH family.

The protein localises to the secreted. Its function is as follows. Stimulates the secretion of gonadotropins. The chain is Progonadoliberin-2 (gnrh2) from Dicentrarchus labrax (European seabass).